Reading from the N-terminus, the 772-residue chain is Transducin-like enhancer protein 4 (772 aa).

2 disordered regions span residues 1–24 and 183–359; these read MIRD…PAQP and LPIK…LTGL. A q domain region spans residues 1-137; it reads MIRDLSKMYP…AIIGQQLQAQ (137 aa). Residues 138 to 205 are GP domain; the sequence is HLSHAHGLPV…HQRDRDSIKS (68 aa). Positions 184–203 are enriched in basic and acidic residues; it reads PIKDEKKHHDSDHQRDRDSI. Over residues 204-213 the composition is skewed to low complexity; the sequence is KSSSVSPSAS. A ccN domain region spans residues 206 to 275; it reads SSVSPSASFR…SPRGSPAHSP (70 aa). Composition is skewed to basic and acidic residues over residues 216-253 and 274-290; these read AAEK…KSDD and SPRE…KKDA. An SP domain region spans residues 276-452; it reads RENGLDKPRL…GGKPAYSFHV (177 aa). Low complexity predominate over residues 291 to 306; that stretch reads PISPASIASSSSTPSS. Basic and acidic residues predominate over residues 307–316; that stretch reads KSKEHSHNEK. A compositionally biased stretch (polar residues) spans 318 to 329; sequence TTPVSKSNTPTP. WD repeat units lie at residues 484-522, 530-569, 574-613, 616-655, 657-696, 698-737, and 739-772; these read NHGE…NKSP, NRDN…PRIK, SSAP…LVRQ, GHTD…QLQQ, DFTS…KYQL, LHES…SIFQ, and KESS…EVIY.

This sequence belongs to the WD repeat Groucho/TLE family. As to quaternary structure, interacts with tcf7, tcf7l1, ripply2.2/bowline, dscr6/ripply3 and foxd3. Associates with tbx6 in the presence of ripply2.2/bowline. Interacts with EFNB1 through the SP domain. In terms of processing, ubiquitinated by XIAP/BIRC4. As to expression, expressed at high levels in the spleen and ovary.

The protein resides in the nucleus. Transcriptional corepressor. Functions with ripply2.2/bowline to down regulate transcription of tbx6-dependent gene expression. Represses transcription of siamois and nodal3. The chain is Transducin-like enhancer protein 4 (tle4) from Xenopus laevis (African clawed frog).